The chain runs to 408 residues: MPEIPVGSQIFDVVFHPSSAIAYTGLLNGHIKAFAYGEQGDSHNLFSLRPSKRSCRGLSLNGDGSKLYAVGKSKALHIVDTTTTDIDARSAAHDCAINRVKSLMPWVVATGDDDGTVKLWDPRKRDSVKTYTQHFDYISDFLWLDDKKQLVATSGDGTLSVMDVRAKEPKVVAQSEDQEDDLLSIVAIKSAQKILVGTQLGILSVFNRKKGWGDCVDRIPGHPLSIDTLCNIPDDIPDTDPTSTVLTGSSDGFVRVVQILPTKFLGVVADHGEFPVERIAVGGGRYWVGSVGHDEVLRMTDLGAFFHENHVDSDEEEDDEEEWGGIEGADGSEGEEDEEGKAVEGSAEKGGGASSDESDDEDEEMEPQLGDQSSKRKRQPEVELPDPSRKSKKGKKETVIDKDFFDGL.

WD repeat units lie at residues 5–44 (PVGS…DSHN), 50–86 (PSKR…TTDI), 87–130 (DARS…SVKT), 133–172 (QHFD…PKVV), 177–216 (DQED…GDCV), and 221–267 (GHPL…FLGV). The segment at 311-408 (VDSDEEEDDE…VIDKDFFDGL (98 aa)) is disordered. 2 stretches are compositionally biased toward acidic residues: residues 313–339 (SDEE…EDEE) and 356–366 (DESDDEDEEME). Residues 396–408 (KETVIDKDFFDGL) show a composition bias toward basic and acidic residues.

The protein belongs to the WD repeat WDR55 family.

The protein localises to the nucleus. Its subcellular location is the nucleolus. This is WD repeat-containing protein JIP5 (JIP5) from Coprinopsis cinerea (strain Okayama-7 / 130 / ATCC MYA-4618 / FGSC 9003) (Inky cap fungus).